We begin with the raw amino-acid sequence, 469 residues long: Ribosomal protein uS12 methylthiotransferase RimO (469 aa).

Residues 3–119 form the MTTase N-terminal domain; that stretch reads TRVYMHTLGC…VARIVSDAQA (117 aa). Cys-12, Cys-48, Cys-82, Cys-154, Cys-158, and Cys-161 together coordinate [4Fe-4S] cluster. In terms of domain architecture, Radical SAM core spans 140-370; that stretch reads SLPSHTAYLK…MAVQQAISRA (231 aa). Positions 373–441 constitute a TRAM domain; it reads QAMIGRRVEV…EYDLVGRVVA (69 aa). The segment at 444-469 is disordered; the sequence is PSRAARPLPAAPRAAPARKGGLNVLR. The segment covering 447-461 has biased composition (low complexity); sequence AARPLPAAPRAAPAR.

Belongs to the methylthiotransferase family. RimO subfamily. It depends on [4Fe-4S] cluster as a cofactor.

It is found in the cytoplasm. The enzyme catalyses L-aspartate(89)-[ribosomal protein uS12]-hydrogen + (sulfur carrier)-SH + AH2 + 2 S-adenosyl-L-methionine = 3-methylsulfanyl-L-aspartate(89)-[ribosomal protein uS12]-hydrogen + (sulfur carrier)-H + 5'-deoxyadenosine + L-methionine + A + S-adenosyl-L-homocysteine + 2 H(+). Catalyzes the methylthiolation of an aspartic acid residue of ribosomal protein uS12. The polypeptide is Ribosomal protein uS12 methylthiotransferase RimO (Anaeromyxobacter sp. (strain K)).